Here is a 350-residue protein sequence, read N- to C-terminus: C5a anaphylatoxin chemotactic receptor 1 (350 aa).

The Extracellular portion of the chain corresponds to 1 to 37; it reads MDSFNYTTPDYGHYDDKDTLDPNTPVDKTSNTLRVPD. Residues 10–18 form a required for CHIPS binding region; sequence DYGHYDDKD. Sulfotyrosine occurs at positions 11 and 14. Positions 21–30 are involved in C5a binding; that stretch reads DPNTPVDKTS. Residues 38–64 form a helical membrane-spanning segment; that stretch reads ILALVIFAVVFLVGVLGNALVVWVTAF. The Cytoplasmic segment spans residues 65–69; the sequence is EVKRT. Residues 70–93 form a helical membrane-spanning segment; sequence INAIWFLNLAVADFLSCLALPILF. Residues 94 to 110 lie on the Extracellular side of the membrane; it reads TSIVQHHHWPFGGAACR. An intrachain disulfide couples Cys109 to Cys188. The helical transmembrane segment at 111-132 threads the bilayer; the sequence is ILPSLILLNMYASILLLATISA. Over 133–153 the chain is Cytoplasmic; that stretch reads DRFLLVFKPIWCQNFRGAGLA. The chain crosses the membrane as a helical span at residues 154-174; sequence WIACAVAWGLALLLTIPSFLY. Over 175 to 200 the chain is Extracellular; it reads RVVREEYFPPKVLCGVDYSHDKQRER. Residues 201 to 226 form a helical membrane-spanning segment; the sequence is AVAVVRLVLGFLWPLLTLTICYTFIL. The Cytoplasmic portion of the chain corresponds to 227–242; it reads LRTWSRRATRSTKTLK. The chain crosses the membrane as a helical span at residues 243–265; sequence VVVAVVASFFIFWLPYQVTGIMM. The Extracellular portion of the chain corresponds to 266-282; it reads SFLEPSSPTFLLLKKLD. A helical transmembrane segment spans residues 283–303; it reads SLCVSFAYINCCINPIIYVVA. The Cytoplasmic segment spans residues 304–350; it reads GQGFQGRLRKSLPSLLRNVLTEESVVRESKSFTRSTVDTMAEKTQAV. Phosphoserine occurs at positions 314, 317, 327, 332, 334, and 338.

Belongs to the G-protein coupled receptor 1 family. Homodimer. May also form higher-order oligomers. Interacts (when phosphorylated) with ARRB1 and ARRB2; the interaction is associated with internalization of C5aR. Interacts (via N-terminal domain) with S.aureus chemotaxis inhibitory protein (CHIPS); the interaction blocks the receptor and may thus inhibit the immune response. Sulfation plays a critical role in the association of C5aR with C5a, but no significant role in the ability of the receptor to transduce a signal and mobilize calcium in response to a small peptide agonist. Sulfation at Tyr-14 is important for CHIPS binding. In terms of processing, phosphorylated on serine residues in response to C5a binding, resulting in internalization of the receptor and short-term desensitization to C5a.

It is found in the cell membrane. The protein resides in the cytoplasmic vesicle. Receptor for the chemotactic and inflammatory peptide anaphylatoxin C5a. The ligand interacts with at least two sites on the receptor: a high-affinity site on the extracellular N-terminus, and a second site in the transmembrane region which activates downstream signaling events. Receptor activation stimulates chemotaxis, granule enzyme release, intracellular calcium release and superoxide anion production. The protein is C5a anaphylatoxin chemotactic receptor 1 (C5AR1) of Gorilla gorilla gorilla (Western lowland gorilla).